The primary structure comprises 471 residues: Ammonium transporter Rh type B (471 aa).

Over 1–13 (MAGSPSRAAGRRL) the chain is Cytoplasmic. The helical transmembrane segment at 14–33 (QLPLLSFLQGATAVLFAVFV) threads the bilayer. Topologically, residues 34–60 (RYNHKTDAALWHRGNHSNADNEFYFRY) are extracellular. Residue asparagine 48 is glycosylated (N-linked (GlcNAc...) asparagine). Residues 61 to 81 (PSFQDVHAMVFVGFGFLMVFL) form a helical membrane-spanning segment. Residues 82-85 (QRYG) are Cytoplasmic-facing. Residues 86-106 (FSSVGFTFLLAAFALQWSTLV) traverse the membrane as a helical segment. The Extracellular portion of the chain corresponds to 107–123 (QGFLHSFHGGHIHVGVE). Residues 124-144 (SMINADFCAGAVLISFGAVLG) form a helical membrane-spanning segment. At 145 to 148 (KTGP) the chain is on the cytoplasmic side. A helical transmembrane segment spans residues 149 to 169 (AQLLLMALLEVVLFGINEFVL). Residues 170-177 (LHLLGVRD) are Extracellular-facing. Residues 178 to 200 (AGGSMTIHTFGAYFGLVLSQVLY) form a helical membrane-spanning segment. The Cytoplasmic segment spans residues 201–217 (RPQLEKSKHRQGLYHSD). The chain crosses the membrane as a helical span at residues 218-238 (LFAMIGTIFLWIFWPSFNAAL). The Extracellular portion of the chain corresponds to 239-249 (TSLGAGQHRTA). A helical transmembrane segment spans residues 250-270 (LNTYYSLAASTLGTFALSALV). Residues 271-280 (GEDGRLDMVH) are Cytoplasmic-facing. The helical transmembrane segment at 281–301 (IQNAALAGRVVVGTSSEMMLT) threads the bilayer. Position 302 (proline 302) is a topological domain, extracellular. Residues 303–323 (FGALAAGFLAGTVSTLGYKFF) form a helical membrane-spanning segment. Topologically, residues 324 to 344 (TPILESKFKVQDTCGVHNLHG) are cytoplasmic. The chain crosses the membrane as a helical span at residues 345 to 365 (MPGVLGVLLGVLVAGLATHEA). The Extracellular segment spans residues 366–391 (YGDGLESVFPLIAEGQRSATSQAMYQ). Residues 392-412 (LFGLFVTLMFASVGGGLGGLL) traverse the membrane as a helical segment. Residues 413–471 (LKLPFLDSPPDSQCYEDQVHWQAPGATLSPLPTPAFQVPGEHEDKAQRPLRVEEADTQA) lie on the Cytoplasmic side of the membrane. Residues 414-422 (KLPFLDSPP) form an interaction with ANK3 region. The Basolateral sorting signal motif lies at 427–430 (YEDQ). The interval 437-471 (GATLSPLPTPAFQVPGEHEDKAQRPLRVEEADTQA) is disordered. Residues 452-471 (GEHEDKAQRPLRVEEADTQA) show a composition bias toward basic and acidic residues.

This sequence belongs to the ammonium transporter (TC 2.A.49) family. Rh subfamily. Interacts (via C-terminus) with ANK2 and ANK3; required for targeting to the basolateral membrane. In terms of processing, N-glycosylated.

The protein resides in the cell membrane. It is found in the basolateral cell membrane. It carries out the reaction NH4(+)(in) = NH4(+)(out). The catalysed reaction is methylamine(out) = methylamine(in). The enzyme catalyses CO2(out) = CO2(in). Functionally, ammonium transporter involved in the maintenance of acid-base homeostasis. Transports ammonium and its related derivative methylammonium across the basolateral plasma membrane of epithelial cells likely contributing to renal transepithelial ammonia transport and ammonia metabolism. May transport either NH4(+) or NH3 ammonia species predominantly mediating an electrogenic NH4(+) transport. May act as a CO2 channel providing for renal acid secretion. The chain is Ammonium transporter Rh type B (RHBG) from Pongo pygmaeus (Bornean orangutan).